The chain runs to 622 residues: Fanconi anemia group G protein (622 aa).

At serine 7 the chain carries Phosphoserine. TPR repeat units lie at residues 246–279 (VQVYTALGSCHRKMGNPQRALLYLVAALKEGSAW), 344–377 (SQTKHILASRCLQTGRAGDAAEHYLDLLALLLDS), 453–486 (SATHLLQGQAWVQLGAQKVAISEFSRCLELLFRA), and 514–547 (AAALISRGLEWVASGQDTKALQDFLLSVQMCPGN).

Belongs to the multisubunit FA complex composed of FANCA, FANCB, FANCC, FANCE, FANCF, FANCG, FANCL/PHF9 and FANCM. The complex is not found in FA patients. In complex with FANCF, FANCA and FANCL, but not with FANCC, nor FANCE, interacts with HES1; this interaction may be essential for the stability and nuclear localization of FA core complex proteins. The complex with FANCC and FANCG may also include EIF2AK2 and HSP70. When phosphorylated at Ser-7, forms a complex with BRCA2, FANCD2 and XRCC3. Highly expressed in testis and thymus. Found in lymphoblasts.

The protein resides in the nucleus. It localises to the cytoplasm. Functionally, DNA repair protein that may operate in a postreplication repair or a cell cycle checkpoint function. May be implicated in interstrand DNA cross-link repair and in the maintenance of normal chromosome stability. Candidate tumor suppressor gene. The chain is Fanconi anemia group G protein (FANCG) from Homo sapiens (Human).